The primary structure comprises 309 residues: Oxygen-dependent coproporphyrinogen-III oxidase (309 aa).

S100 lines the substrate pocket. A divalent metal cation-binding residues include H104 and H114. The active-site Proton donor is the H114. Residue 116-118 (NVR) coordinates substrate. H153 and H183 together coordinate a divalent metal cation. The interval 248–283 (YAEFNLVYDRGTLFGLQSGGRTESILMSLPPIVHWE) is important for dimerization. 266 to 268 (GGR) contributes to the substrate binding site.

Belongs to the aerobic coproporphyrinogen-III oxidase family. Homodimer. It depends on a divalent metal cation as a cofactor.

The protein localises to the cytoplasm. It carries out the reaction coproporphyrinogen III + O2 + 2 H(+) = protoporphyrinogen IX + 2 CO2 + 2 H2O. Its pathway is porphyrin-containing compound metabolism; protoporphyrin-IX biosynthesis; protoporphyrinogen-IX from coproporphyrinogen-III (O2 route): step 1/1. Involved in the heme biosynthesis. Catalyzes the aerobic oxidative decarboxylation of propionate groups of rings A and B of coproporphyrinogen-III to yield the vinyl groups in protoporphyrinogen-IX. The chain is Oxygen-dependent coproporphyrinogen-III oxidase from Legionella pneumophila (strain Lens).